Consider the following 612-residue polypeptide: Dihydroxy-acid dehydratase (612 aa).

Mg(2+) is bound at residue aspartate 81. Position 122 (cysteine 122) interacts with [2Fe-2S] cluster. Aspartate 123 and lysine 124 together coordinate Mg(2+). Residue lysine 124 is modified to N6-carboxylysine. Residue cysteine 193 participates in [2Fe-2S] cluster binding. Residue glutamate 489 participates in Mg(2+) binding. Serine 515 (proton acceptor) is an active-site residue.

It belongs to the IlvD/Edd family. Homodimer. The cofactor is [2Fe-2S] cluster. It depends on Mg(2+) as a cofactor.

The enzyme catalyses (2R)-2,3-dihydroxy-3-methylbutanoate = 3-methyl-2-oxobutanoate + H2O. It carries out the reaction (2R,3R)-2,3-dihydroxy-3-methylpentanoate = (S)-3-methyl-2-oxopentanoate + H2O. The protein operates within amino-acid biosynthesis; L-isoleucine biosynthesis; L-isoleucine from 2-oxobutanoate: step 3/4. Its pathway is amino-acid biosynthesis; L-valine biosynthesis; L-valine from pyruvate: step 3/4. Functions in the biosynthesis of branched-chain amino acids. Catalyzes the dehydration of (2R,3R)-2,3-dihydroxy-3-methylpentanoate (2,3-dihydroxy-3-methylvalerate) into 2-oxo-3-methylpentanoate (2-oxo-3-methylvalerate) and of (2R)-2,3-dihydroxy-3-methylbutanoate (2,3-dihydroxyisovalerate) into 2-oxo-3-methylbutanoate (2-oxoisovalerate), the penultimate precursor to L-isoleucine and L-valine, respectively. The polypeptide is Dihydroxy-acid dehydratase (Stutzerimonas stutzeri (strain A1501) (Pseudomonas stutzeri)).